Reading from the N-terminus, the 754-residue chain is Carbon catabolite repressor protein 4 homolog 6 (754 aa).

Disordered regions lie at residues 34–65 (PYRG…DQFV) and 85–176 (EPYR…KTPP). The span at 50–61 (FSDRPYNDDAGR) shows a compositional bias: basic and acidic residues. 2 stretches are compositionally biased toward polar residues: residues 96–106 (QRQQPPFNQNY) and 116–133 (GQWQ…NQNY). Residues 162-171 (KPSDYREWEY) are compositionally biased toward basic and acidic residues. Glutamate 237 contributes to the Mg(2+) binding site. Disordered regions lie at residues 404 to 431 (VSAE…QGQV) and 494 to 558 (IENR…DQDI). 3 stretches are compositionally biased toward polar residues: residues 415 to 431 (NYTT…QGQV), 503 to 525 (GNLS…QHAS), and 534 to 545 (DRSVSSGLSETE).

It belongs to the CCR4/nocturin family. Component of the CCR4-NOT complex, at least composed of CRR4 and CAF1 proteins. Requires Mg(2+) as cofactor.

It is found in the nucleus. It localises to the cytoplasm. The enzyme catalyses Exonucleolytic cleavage of poly(A) to 5'-AMP.. Its function is as follows. Acts as a catalytic component of the CCR4-NOT core complex, which in the nucleus seems to be a general transcription factor, and in the cytoplasm the major mRNA deadenylase involved in mRNA turnover. This Arabidopsis thaliana (Mouse-ear cress) protein is Carbon catabolite repressor protein 4 homolog 6 (CCR4-6).